A 273-amino-acid polypeptide reads, in one-letter code: 2,3,4,5-tetrahydropyridine-2,6-dicarboxylate N-succinyltransferase (273 aa).

Substrate-binding residues include R104 and D141.

Belongs to the transferase hexapeptide repeat family. In terms of assembly, homotrimer.

Its subcellular location is the cytoplasm. The enzyme catalyses (S)-2,3,4,5-tetrahydrodipicolinate + succinyl-CoA + H2O = (S)-2-succinylamino-6-oxoheptanedioate + CoA. The protein operates within amino-acid biosynthesis; L-lysine biosynthesis via DAP pathway; LL-2,6-diaminopimelate from (S)-tetrahydrodipicolinate (succinylase route): step 1/3. This is 2,3,4,5-tetrahydropyridine-2,6-dicarboxylate N-succinyltransferase from Blochmanniella pennsylvanica (strain BPEN).